We begin with the raw amino-acid sequence, 179 residues long: Ribulose bisphosphate carboxylase small subunit, chloroplastic 3 (179 aa).

The transit peptide at 1–58 (MASSATMLSSVATAARAAPAQASMVAPFVGLKSASAFPVTQKPATGLSTLPSNGGRVQ) directs the protein to the chloroplast.

This sequence belongs to the RuBisCO small chain family. In terms of assembly, heterohexadecamer of 8 large and 8 small subunits.

It is found in the plastid. It localises to the chloroplast. Its function is as follows. RuBisCO catalyzes two reactions: the carboxylation of D-ribulose 1,5-bisphosphate, the primary event in carbon dioxide fixation, as well as the oxidative fragmentation of the pentose substrate. Both reactions occur simultaneously and in competition at the same active site. Although the small subunit is not catalytic it is essential for maximal activity. The protein is Ribulose bisphosphate carboxylase small subunit, chloroplastic 3 of Fritillaria agrestis (Stinkbells).